Reading from the N-terminus, the 205-residue chain is Pyridoxal 5'-phosphate synthase subunit PdxT (205 aa).

53–55 lines the L-glutamine pocket; the sequence is GES. Cys85 (nucleophile) is an active-site residue. Residues Arg112 and 140 to 141 each bind L-glutamine; that span reads IR. Residues His176 and Glu178 each act as charge relay system in the active site.

The protein belongs to the glutaminase PdxT/SNO family. As to quaternary structure, in the presence of PdxS, forms a dodecamer of heterodimers. Only shows activity in the heterodimer.

It catalyses the reaction aldehydo-D-ribose 5-phosphate + D-glyceraldehyde 3-phosphate + L-glutamine = pyridoxal 5'-phosphate + L-glutamate + phosphate + 3 H2O + H(+). The catalysed reaction is L-glutamine + H2O = L-glutamate + NH4(+). The protein operates within cofactor biosynthesis; pyridoxal 5'-phosphate biosynthesis. In terms of biological role, catalyzes the hydrolysis of glutamine to glutamate and ammonia as part of the biosynthesis of pyridoxal 5'-phosphate. The resulting ammonia molecule is channeled to the active site of PdxS. The polypeptide is Pyridoxal 5'-phosphate synthase subunit PdxT (Haloquadratum walsbyi (strain DSM 16790 / HBSQ001)).